The following is a 205-amino-acid chain: Pectinesterase inhibitor 3 (205 aa).

Residues 1-25 form the signal peptide; sequence MAPTQNLFLVAIAFAVIFTASTVHG. 2 disulfides stabilise this stretch: cysteine 38/cysteine 47 and cysteine 104/cysteine 156.

Belongs to the PMEI family. As to expression, expressed in apical meristem.

The protein localises to the secreted. It localises to the extracellular space. It is found in the apoplast. Functionally, pectin methylesterase (PME) inhibitor that can target PMEs (e.g. PME2 and PME3) in a pH-dependent manner, mainly in slightly acidic conditions (pH 6.3 and 5.0) but not at pH 7.5; this processus relies on changes in the protonation of amino acids involved in intermolecular and intramolecular interactions. Regulates de-methylesterification of pectins in the apical meristem and affects primordia formation and phyllotactic patterning. The polypeptide is Pectinesterase inhibitor 3 (Arabidopsis thaliana (Mouse-ear cress)).